The primary structure comprises 376 residues: uncharacterized protein (376 aa).

It belongs to the mimivirus R1 family.

This is an uncharacterized protein from Acanthamoeba polyphaga mimivirus (APMV).